A 243-amino-acid chain; its full sequence is Probable transcriptional regulatory protein Ldb0677 (243 aa).

The segment at 1-22 is disordered; it reads MSGHSKWHNIQGRKNAQDAKRG.

This sequence belongs to the TACO1 family.

The protein localises to the cytoplasm. In Lactobacillus delbrueckii subsp. bulgaricus (strain ATCC 11842 / DSM 20081 / BCRC 10696 / JCM 1002 / NBRC 13953 / NCIMB 11778 / NCTC 12712 / WDCM 00102 / Lb 14), this protein is Probable transcriptional regulatory protein Ldb0677.